The sequence spans 573 residues: Phosphoenolpyruvate-protein phosphotransferase (573 aa).

Histidine 190 (tele-phosphohistidine intermediate) is an active-site residue. Arginine 297 and arginine 332 together coordinate phosphoenolpyruvate. The Mg(2+) site is built by glutamate 431 and aspartate 455. Phosphoenolpyruvate is bound by residues 454–455 and arginine 465; that span reads ND. Cysteine 502 (proton donor) is an active-site residue.

The protein belongs to the PEP-utilizing enzyme family. In terms of assembly, homodimer. Mg(2+) is required as a cofactor.

The protein resides in the cytoplasm. The enzyme catalyses L-histidyl-[protein] + phosphoenolpyruvate = N(pros)-phospho-L-histidyl-[protein] + pyruvate. Irreversibly inhibited the sulfhydryl reagent N-ethylmaleimide (NEM). Functionally, general (non sugar-specific) component of the phosphoenolpyruvate-dependent sugar phosphotransferase system (sugar PTS). This major carbohydrate active-transport system catalyzes the phosphorylation of incoming sugar substrates concomitantly with their translocation across the cell membrane. Enzyme I transfers the phosphoryl group from phosphoenolpyruvate (PEP) to the phosphoryl carrier protein (HPr). In Mycoplasma capricolum subsp. capricolum (strain California kid / ATCC 27343 / NCTC 10154), this protein is Phosphoenolpyruvate-protein phosphotransferase (ptsI).